The primary structure comprises 250 residues: Tripartite motif-containing protein 73 (250 aa).

The RING-type zinc finger occupies 16-57 (CPICLEVFKESLMLQCGHSYCKGCLVSLSYHLDTKVRCPMCW). The B box-type zinc-finger motif lies at 84–125 (PEPKVCVHHRNPLSLFCEKDQELICGLCGLLGSHQHHPVTPV). Residues C89, H92, C111, and H117 each contribute to the Zn(2+) site. Coiled-coil stretches lie at residues 125-169 (VSTV…NESD) and 204-235 (LVAS…FGNE).

Belongs to the TRIM/RBCC family.

In Homo sapiens (Human), this protein is Tripartite motif-containing protein 73 (TRIM73).